The sequence spans 212 residues: Ribonuclease HII (212 aa).

An RNase H type-2 domain is found at 20–209; the sequence is TCVVGVDEVG…VHNILYQEAS (190 aa). Positions 26, 27, and 117 each coordinate a divalent metal cation.

Belongs to the RNase HII family. It depends on Mn(2+) as a cofactor. Mg(2+) serves as cofactor.

The protein resides in the cytoplasm. The catalysed reaction is Endonucleolytic cleavage to 5'-phosphomonoester.. Functionally, endonuclease that specifically degrades the RNA of RNA-DNA hybrids. The polypeptide is Ribonuclease HII (Cereibacter sphaeroides (strain ATCC 17029 / ATH 2.4.9) (Rhodobacter sphaeroides)).